Consider the following 222-residue polypeptide: Small ribosomal subunit protein uS3 (222 aa).

Residues 39-107 enclose the KH type-2 domain; that stretch reads IRKYIKTKFY…QININIAEIK (69 aa).

Belongs to the universal ribosomal protein uS3 family. In terms of assembly, part of the 30S ribosomal subunit. Forms a tight complex with proteins S10 and S14.

Binds the lower part of the 30S subunit head. Binds mRNA in the 70S ribosome, positioning it for translation. The polypeptide is Small ribosomal subunit protein uS3 (Carboxydothermus hydrogenoformans (strain ATCC BAA-161 / DSM 6008 / Z-2901)).